A 123-amino-acid chain; its full sequence is MAKIKARDLRGKKKEELLKQLDDLKVELSQLRVAKVTGGAASKLSKIRVVRKSIARVLTVINQTQKENLRKFYKGKKYKPLDLRPKKTRAMRRRLNKHEEGLKTKKQQRKERLYPPRKYAVKA.

The segment at 84–123 (RPKKTRAMRRRLNKHEEGLKTKKQQRKERLYPPRKYAVKA) is disordered. Residues 86-96 (KKTRAMRRRLN) are compositionally biased toward basic residues.

This sequence belongs to the universal ribosomal protein uL29 family. In terms of assembly, component of the large ribosomal subunit.

The protein resides in the cytoplasm. In terms of biological role, component of the large ribosomal subunit. The ribosome is a large ribonucleoprotein complex responsible for the synthesis of proteins in the cell. The sequence is that of Large ribosomal subunit protein uL29 (RPL35) from Ophiophagus hannah (King cobra).